We begin with the raw amino-acid sequence, 347 residues long: Probable inactive UDP-arabinopyranose mutase 2 (347 aa).

N-linked (Glc...) arginine glycosylation occurs at Arg-145.

It belongs to the RGP family. In terms of assembly, heteromers with UAM1 and UAM3. Is not reversibly glycosylated in vitro by UDP-glucose, UDP-xylose and UDP-galactose.

The protein resides in the golgi apparatus. Its function is as follows. Probable inactive UDP-L-arabinose mutase. Inactive in vitro, but associates with UAM1 and UAM3. This Oryza sativa subsp. japonica (Rice) protein is Probable inactive UDP-arabinopyranose mutase 2.